Reading from the N-terminus, the 715-residue chain is Fatty acid oxidation complex subunit alpha (715 aa).

Positions 1–190 (MTTTSAFMLN…KAGLVDDVVP (190 aa)) are enoyl-CoA hydratase. Positions 306–714 (GPLNSVGILG…FWTNGETDQG (409 aa)) are 3-hydroxyacyl-CoA dehydrogenase.

The protein in the N-terminal section; belongs to the enoyl-CoA hydratase/isomerase family. This sequence in the central section; belongs to the 3-hydroxyacyl-CoA dehydrogenase family. Heterotetramer of two alpha chains (FadJ) and two beta chains (FadI).

It is found in the cytoplasm. It carries out the reaction a (3S)-3-hydroxyacyl-CoA = a (2E)-enoyl-CoA + H2O. The enzyme catalyses a 4-saturated-(3S)-3-hydroxyacyl-CoA = a (3E)-enoyl-CoA + H2O. The catalysed reaction is a (3S)-3-hydroxyacyl-CoA + NAD(+) = a 3-oxoacyl-CoA + NADH + H(+). It catalyses the reaction (3S)-3-hydroxybutanoyl-CoA = (3R)-3-hydroxybutanoyl-CoA. It functions in the pathway lipid metabolism; fatty acid beta-oxidation. Its function is as follows. Catalyzes the formation of a hydroxyacyl-CoA by addition of water on enoyl-CoA. Also exhibits 3-hydroxyacyl-CoA epimerase and 3-hydroxyacyl-CoA dehydrogenase activities. The polypeptide is Fatty acid oxidation complex subunit alpha (Salmonella typhimurium (strain LT2 / SGSC1412 / ATCC 700720)).